Reading from the N-terminus, the 158-residue chain is 6,7-dimethyl-8-ribityllumazine synthase (158 aa).

5-amino-6-(D-ribitylamino)uracil contacts are provided by residues F23, 61-63, and 85-87; these read SFE and AVI. (2S)-2-hydroxy-3-oxobutyl phosphate is bound at residue 90–91; the sequence is DT. The Proton donor role is filled by H93. F118 provides a ligand contact to 5-amino-6-(D-ribitylamino)uracil. Residue R132 participates in (2S)-2-hydroxy-3-oxobutyl phosphate binding.

The protein belongs to the DMRL synthase family.

The enzyme catalyses (2S)-2-hydroxy-3-oxobutyl phosphate + 5-amino-6-(D-ribitylamino)uracil = 6,7-dimethyl-8-(1-D-ribityl)lumazine + phosphate + 2 H2O + H(+). It participates in cofactor biosynthesis; riboflavin biosynthesis; riboflavin from 2-hydroxy-3-oxobutyl phosphate and 5-amino-6-(D-ribitylamino)uracil: step 1/2. Functionally, catalyzes the formation of 6,7-dimethyl-8-ribityllumazine by condensation of 5-amino-6-(D-ribitylamino)uracil with 3,4-dihydroxy-2-butanone 4-phosphate. This is the penultimate step in the biosynthesis of riboflavin. The protein is 6,7-dimethyl-8-ribityllumazine synthase of Prochlorococcus marinus (strain NATL1A).